The primary structure comprises 173 residues: T-complex protein 1 subunit alpha (173 aa).

Belongs to the TCP-1 chaperonin family. As to quaternary structure, component of the chaperonin-containing T-complex (TRiC), a heterooligomeric complex of about 850 to 900 kDa that forms two stacked rings, 12 to 16 nm in diameter.

It is found in the cytoplasm. It localises to the cytosol. Its function is as follows. Component of the chaperonin-containing T-complex (TRiC), a molecular chaperone complex that assists the folding of proteins upon ATP hydrolysis. This chain is T-complex protein 1 subunit alpha, found in Ambystoma mexicanum (Axolotl).